Here is a 130-residue protein sequence, read N- to C-terminus: Small ribosomal subunit protein uS9 (130 aa).

The disordered stretch occupies residues 109 to 130 (RMKERRKYGLKKARKAPQFSKR). The span at 111-130 (KERRKYGLKKARKAPQFSKR) shows a compositional bias: basic residues.

This sequence belongs to the universal ribosomal protein uS9 family.

The polypeptide is Small ribosomal subunit protein uS9 (Caldanaerobacter subterraneus subsp. tengcongensis (strain DSM 15242 / JCM 11007 / NBRC 100824 / MB4) (Thermoanaerobacter tengcongensis)).